A 142-amino-acid chain; its full sequence is Large ribosomal subunit protein bL17 (142 aa).

This sequence belongs to the bacterial ribosomal protein bL17 family. As to quaternary structure, part of the 50S ribosomal subunit. Contacts protein L32.

In Chlamydia pneumoniae (Chlamydophila pneumoniae), this protein is Large ribosomal subunit protein bL17.